The primary structure comprises 233 residues: Zinc import ATP-binding protein ZnuC (233 aa).

The region spanning 6–222 (IEFRNVSKKF…SEFSNALSSL (217 aa)) is the ABC transporter domain. Residue 38–45 (GPNGAGKT) coordinates ATP.

The protein belongs to the ABC transporter superfamily. Zinc importer (TC 3.A.1.15.5) family. The complex is composed of two ATP-binding proteins (ZnuC), two transmembrane proteins (ZnuB) and a solute-binding protein (ZnuA).

Its subcellular location is the cell inner membrane. It carries out the reaction Zn(2+)(out) + ATP(in) + H2O(in) = Zn(2+)(in) + ADP(in) + phosphate(in) + H(+)(in). Functionally, part of the ABC transporter complex ZnuABC involved in zinc import. Responsible for energy coupling to the transport system. In Rickettsia prowazekii (strain Madrid E), this protein is Zinc import ATP-binding protein ZnuC.